The chain runs to 210 residues: Proteasome subunit beta (210 aa).

The propeptide at 1-9 is removed in mature form; by autocatalysis; that stretch reads MIHDKVFKG. The active-site Nucleophile is the Thr10.

The protein belongs to the peptidase T1B family. As to quaternary structure, the 20S proteasome core is composed of 14 alpha and 14 beta subunits that assemble into four stacked heptameric rings, resulting in a barrel-shaped structure. The two inner rings, each composed of seven catalytic beta subunits, are sandwiched by two outer rings, each composed of seven alpha subunits. The catalytic chamber with the active sites is on the inside of the barrel. Has a gated structure, the ends of the cylinder being occluded by the N-termini of the alpha-subunits. Is capped at one or both ends by the proteasome regulatory ATPase, PAN.

It is found in the cytoplasm. The enzyme catalyses Cleavage of peptide bonds with very broad specificity.. The formation of the proteasomal ATPase PAN-20S proteasome complex, via the docking of the C-termini of PAN into the intersubunit pockets in the alpha-rings, triggers opening of the gate for substrate entry. Interconversion between the open-gate and close-gate conformations leads to a dynamic regulation of the 20S proteasome proteolysis activity. In terms of biological role, component of the proteasome core, a large protease complex with broad specificity involved in protein degradation. The polypeptide is Proteasome subunit beta (Ferroglobus placidus (strain DSM 10642 / AEDII12DO)).